We begin with the raw amino-acid sequence, 311 residues long: tRNA-cytidine(32) 2-sulfurtransferase (311 aa).

A PP-loop motif motif is present at residues 47 to 52 (SGGKDS). The [4Fe-4S] cluster site is built by C122, C125, and C213.

This sequence belongs to the TtcA family. As to quaternary structure, homodimer. It depends on Mg(2+) as a cofactor. Requires [4Fe-4S] cluster as cofactor.

The protein localises to the cytoplasm. The enzyme catalyses cytidine(32) in tRNA + S-sulfanyl-L-cysteinyl-[cysteine desulfurase] + AH2 + ATP = 2-thiocytidine(32) in tRNA + L-cysteinyl-[cysteine desulfurase] + A + AMP + diphosphate + H(+). It participates in tRNA modification. Its function is as follows. Catalyzes the ATP-dependent 2-thiolation of cytidine in position 32 of tRNA, to form 2-thiocytidine (s(2)C32). The sulfur atoms are provided by the cysteine/cysteine desulfurase (IscS) system. This chain is tRNA-cytidine(32) 2-sulfurtransferase, found in Escherichia coli (strain K12 / MC4100 / BW2952).